A 295-amino-acid polypeptide reads, in one-letter code: Methionine aminopeptidase (295 aa).

His-63 contacts substrate. Positions 83, 94, and 154 each coordinate a divalent metal cation. Position 162 (His-162) interacts with substrate. Glu-188 and Glu-281 together coordinate a divalent metal cation.

Belongs to the peptidase M24A family. Methionine aminopeptidase archaeal type 2 subfamily. As to quaternary structure, monomer. Fe(2+) is required as a cofactor. The cofactor is Co(2+). It depends on Ni(2+) as a cofactor. Requires Mn(2+) as cofactor.

It catalyses the reaction Release of N-terminal amino acids, preferentially methionine, from peptides and arylamides.. Its function is as follows. Removes the N-terminal methionine from nascent proteins. The N-terminal methionine is often cleaved when the second residue in the primary sequence is small and uncharged (Met-Ala-, Cys, Gly, Pro, Ser, Thr, or Val). This Thermococcus onnurineus (strain NA1) protein is Methionine aminopeptidase.